We begin with the raw amino-acid sequence, 314 residues long: Calcium homeostasis modulator protein 4 (314 aa).

Topologically, residues 1–14 are cytoplasmic; that stretch reads MCPTLNNIVSSLQR. Residues 15-37 form a helical membrane-spanning segment; it reads NGIFINSLIAALTIGGQQLFSSS. The Extracellular segment spans residues 38 to 48; that stretch reads TFSCPCQVGKN. 2 disulfide bridges follow: Cys41–Cys131 and Cys43–Cys162. The chain crosses the membrane as a helical span at residues 49 to 71; it reads FYYGSAFLVIPALILLVAGFALR. Residues 72-103 lie on the Cytoplasmic side of the membrane; it reads SQMWTITGEYCCSCAPPYRRISPLECKLACLR. The helical transmembrane segment at 104-129 threads the bilayer; sequence FFSITGRAVIAPLTWLAVTLLTGTYY. Residues 130 to 183 lie on the Extracellular side of the membrane; sequence ECAASEFASVDHYPMFDNVSASKREEILAGFPCCRSAPSDVILVRDEIALLHRY. A helical membrane pass occupies residues 184-207; the sequence is QSQMLGWILITLATIAALVSCCVA. The Cytoplasmic portion of the chain corresponds to 208 to 314; sequence KCCSPLTSLQ…DRSRGIELKP (107 aa).

This sequence belongs to the CALHM family. As to quaternary structure, oligomerizes to form decameric and undecameric channels. Two hemichannels can assemble in a tail-to-tail manner to form a gap junction. As to expression, placenta.

It is found in the cell membrane. Functionally, may assemble to form gap junction channel-like structures involved in intercellular communication. Channel gating and ion conductance are likely regulated by membrane lipids rather than by membrane depolarization or extracellular calcium levels. This chain is Calcium homeostasis modulator protein 4, found in Homo sapiens (Human).